The primary structure comprises 315 residues: Methionyl-tRNA formyltransferase (315 aa).

Position 114-117 (S114–P117) interacts with (6S)-5,6,7,8-tetrahydrofolate.

The protein belongs to the Fmt family.

It catalyses the reaction L-methionyl-tRNA(fMet) + (6R)-10-formyltetrahydrofolate = N-formyl-L-methionyl-tRNA(fMet) + (6S)-5,6,7,8-tetrahydrofolate + H(+). Functionally, attaches a formyl group to the free amino group of methionyl-tRNA(fMet). The formyl group appears to play a dual role in the initiator identity of N-formylmethionyl-tRNA by promoting its recognition by IF2 and preventing the misappropriation of this tRNA by the elongation apparatus. In Corynebacterium glutamicum (strain R), this protein is Methionyl-tRNA formyltransferase.